The chain runs to 95 residues: Small ribosomal subunit protein uS19 (95 aa).

This sequence belongs to the universal ribosomal protein uS19 family.

Its function is as follows. Protein S19 forms a complex with S13 that binds strongly to the 16S ribosomal RNA. The chain is Small ribosomal subunit protein uS19 (rpsS) from Treponema pallidum (strain Nichols).